Reading from the N-terminus, the 395-residue chain is ATP phosphoribosyltransferase regulatory subunit (395 aa).

Belongs to the class-II aminoacyl-tRNA synthetase family. HisZ subfamily. In terms of assembly, heteromultimer composed of HisG and HisZ subunits.

Its subcellular location is the cytoplasm. It functions in the pathway amino-acid biosynthesis; L-histidine biosynthesis; L-histidine from 5-phospho-alpha-D-ribose 1-diphosphate: step 1/9. Required for the first step of histidine biosynthesis. May allow the feedback regulation of ATP phosphoribosyltransferase activity by histidine. This Ectopseudomonas mendocina (strain ymp) (Pseudomonas mendocina) protein is ATP phosphoribosyltransferase regulatory subunit.